The chain runs to 398 residues: Nicotinate phosphoribosyltransferase (398 aa).

A Phosphohistidine; by autocatalysis modification is found at His222.

It belongs to the NAPRTase family. In terms of processing, transiently phosphorylated on a His residue during the reaction cycle. Phosphorylation strongly increases the affinity for substrates and increases the rate of nicotinate D-ribonucleotide production. Dephosphorylation regenerates the low-affinity form of the enzyme, leading to product release.

The enzyme catalyses nicotinate + 5-phospho-alpha-D-ribose 1-diphosphate + ATP + H2O = nicotinate beta-D-ribonucleotide + ADP + phosphate + diphosphate. It functions in the pathway cofactor biosynthesis; NAD(+) biosynthesis; nicotinate D-ribonucleotide from nicotinate: step 1/1. In terms of biological role, catalyzes the synthesis of beta-nicotinate D-ribonucleotide from nicotinate and 5-phospho-D-ribose 1-phosphate at the expense of ATP. This chain is Nicotinate phosphoribosyltransferase, found in Acidovorax ebreus (strain TPSY) (Diaphorobacter sp. (strain TPSY)).